The chain runs to 228 residues: Protein GlxC (228 aa).

It belongs to the FwdC/FmdC family.

The sequence is that of Protein GlxC (glxC) from Rhizobium meliloti (strain 1021) (Ensifer meliloti).